The following is a 751-amino-acid chain: CCR4-NOT transcription complex subunit 3 (751 aa).

A disordered region spans residues 240–534 (ATSPPSHSHM…QFSTTPEIKA (295 aa)). The span at 257-268 (SSSTPTSTTSSS) shows a compositional bias: low complexity. The span at 284-293 (DDKKRGRSTD) shows a compositional bias: basic and acidic residues. A Phosphothreonine modification is found at Thr-292. Positions 294-315 (SEVSQSPAKNGSKPVHSNQHPQ) are enriched in polar residues. Ser-299 is modified (phosphoserine). Residues 317-330 (PAVPPTYPSGPPPT) show a composition bias toward pro residues. Over residues 339 to 348 (GNNGASTPAA) the composition is skewed to polar residues. Over residues 441 to 450 (SSSGGSSASS) the composition is skewed to low complexity. Polar residues predominate over residues 463–472 (APSTSKESST). The span at 473–498 (AAPSGAGNVASGSGNNSGGPSLLVPL) shows a compositional bias: low complexity. Phosphoserine is present on Ser-540. The repressor domain stretch occupies residues 659–751 (EFYQRLSTET…YRYLEDRDLQ (93 aa)).

It belongs to the CNOT2/3/5 family. In terms of assembly, component of the CCR4-NOT complex; distinct complexes seem to exist that differ in the participation of probably mutually exclusive catalytic subunits. In the complex interacts directly with CNOT2. Interacts with TIP120B and NANOS2. Interacts with EBF1. Interacts in an RNA-independent manner with BICC1 (via KH domains).

The protein resides in the nucleus. Its subcellular location is the cytoplasm. The protein localises to the P-body. Functionally, component of the CCR4-NOT complex which is one of the major cellular mRNA deadenylases and is linked to various cellular processes including bulk mRNA degradation, miRNA-mediated repression, translational repression during translational initiation and general transcription regulation. Additional complex functions may be a consequence of its influence on mRNA expression. May be involved in metabolic regulation; may be involved in recruitment of the CCR4-NOT complex to deadenylation target mRNAs involved in energy metabolism. Involved in mitotic progression and regulation of the spindle assembly checkpoint by regulating the stability of MAD1L1 mRNA. Can repress transcription and may link the CCR4-NOT complex to transcriptional regulation; the repressive function may involve histone deacetylases. Involved in the maintenance of embryonic stem (ES) cell identity; prevents their differentiation towards extraembryonic trophectoderm lineages. The sequence is that of CCR4-NOT transcription complex subunit 3 (Cnot3) from Mus musculus (Mouse).